Consider the following 449-residue polypeptide: Xylose isomerase (449 aa).

Active-site residues include His-103 and Asp-106. Mg(2+)-binding residues include Glu-234, Glu-270, His-273, Asp-298, Asp-309, Asp-311, and Asp-342.

The protein belongs to the xylose isomerase family. Homotetramer. Requires Mg(2+) as cofactor.

The protein resides in the cytoplasm. The enzyme catalyses alpha-D-xylose = alpha-D-xylulofuranose. Its function is as follows. Involved in D-xylose catabolism. This chain is Xylose isomerase (xylA), found in Lactiplantibacillus pentosus (Lactobacillus pentosus).